A 446-amino-acid chain; its full sequence is Eukaryotic translation initiation factor 3 subunit E (446 aa).

One can recognise a PCI domain in the interval 240–420; sequence PLFNDENSRE…GTVVMNHPNS (181 aa).

It belongs to the eIF-3 subunit E family. In terms of assembly, component of the eukaryotic translation initiation factor 3 (eIF-3) complex.

It localises to the cytoplasm. Component of the eukaryotic translation initiation factor 3 (eIF-3) complex, which is involved in protein synthesis of a specialized repertoire of mRNAs and, together with other initiation factors, stimulates binding of mRNA and methionyl-tRNAi to the 40S ribosome. The eIF-3 complex specifically targets and initiates translation of a subset of mRNAs involved in cell proliferation. The protein is Eukaryotic translation initiation factor 3 subunit E of Pyricularia oryzae (strain 70-15 / ATCC MYA-4617 / FGSC 8958) (Rice blast fungus).